The sequence spans 432 residues: Asparagine--tRNA ligase (432 aa).

It belongs to the class-II aminoacyl-tRNA synthetase family. As to quaternary structure, homodimer.

Its subcellular location is the cytoplasm. It carries out the reaction tRNA(Asn) + L-asparagine + ATP = L-asparaginyl-tRNA(Asn) + AMP + diphosphate + H(+). The polypeptide is Asparagine--tRNA ligase (Lactobacillus helveticus (strain DPC 4571)).